Consider the following 102-residue polypeptide: NADH-quinone oxidoreductase subunit K (102 aa).

A run of 3 helical transmembrane segments spans residues 6-26 (LEHG…GLMV), 30-50 (ILFV…AFVV), and 62-82 (VMFI…LAIL).

Belongs to the complex I subunit 4L family. NDH-1 is composed of 13 different subunits. Subunits NuoA, H, J, K, L, M, N constitute the membrane sector of the complex.

It is found in the cell inner membrane. It carries out the reaction a quinone + NADH + 5 H(+)(in) = a quinol + NAD(+) + 4 H(+)(out). In terms of biological role, NDH-1 shuttles electrons from NADH, via FMN and iron-sulfur (Fe-S) centers, to quinones in the respiratory chain. The immediate electron acceptor for the enzyme in this species is believed to be ubiquinone. Couples the redox reaction to proton translocation (for every two electrons transferred, four hydrogen ions are translocated across the cytoplasmic membrane), and thus conserves the redox energy in a proton gradient. In Pseudomonas syringae pv. syringae (strain B728a), this protein is NADH-quinone oxidoreductase subunit K.